Here is a 236-residue protein sequence, read N- to C-terminus: UPF0280 protein Mlab_0453 (236 aa).

It belongs to the UPF0280 family.

This is UPF0280 protein Mlab_0453 from Methanocorpusculum labreanum (strain ATCC 43576 / DSM 4855 / Z).